Here is a 122-residue protein sequence, read N- to C-terminus: Large ribosomal subunit protein bL12 (122 aa).

This sequence belongs to the bacterial ribosomal protein bL12 family. In terms of assembly, homodimer. Part of the ribosomal stalk of the 50S ribosomal subunit. Forms a multimeric L10(L12)X complex, where L10 forms an elongated spine to which 2 to 4 L12 dimers bind in a sequential fashion. Binds GTP-bound translation factors.

Forms part of the ribosomal stalk which helps the ribosome interact with GTP-bound translation factors. Is thus essential for accurate translation. The polypeptide is Large ribosomal subunit protein bL12 (Xylella fastidiosa (strain 9a5c)).